A 271-amino-acid polypeptide reads, in one-letter code: Phosphoglycerate mutase-like protein (271 aa).

His-22 (tele-phosphohistidine intermediate) is an active-site residue. Catalysis depends on Glu-134, which acts as the Proton donor/acceptor. Residues 252–271 are disordered; it reads SAETTNYPGKVPEGLDNPSG.

Belongs to the phosphoglycerate mutase family. Expressed in the shoot apical meristem and meristematic zone of the root tips.

Its function is as follows. May play a role in carbohydrates metabolism. The protein is Phosphoglycerate mutase-like protein of Arabidopsis thaliana (Mouse-ear cress).